Reading from the N-terminus, the 139-residue chain is Putative pre-16S rRNA nuclease (139 aa).

Belongs to the YqgF nuclease family.

The protein localises to the cytoplasm. Could be a nuclease involved in processing of the 5'-end of pre-16S rRNA. This is Putative pre-16S rRNA nuclease from Caldanaerobacter subterraneus subsp. tengcongensis (strain DSM 15242 / JCM 11007 / NBRC 100824 / MB4) (Thermoanaerobacter tengcongensis).